The sequence spans 79 residues: Protein S100-G (79 aa).

Position 2 is an N-acetylserine (Ser2). EF-hand domains lie at 13–48 and 45–79; these read IFEK…KGSS and KGSS…KISQ. Residues Gln26 and Glu31 each coordinate Ca(2+). A Phosphoserine modification is found at Ser47. Positions 58, 60, 62, 64, and 69 each coordinate Ca(2+).

This sequence belongs to the S-100 family.

The chain is Protein S100-G (S100G) from Equus caballus (Horse).